The primary structure comprises 729 residues: 1,4-alpha-glucan branching enzyme GlgB 2 (729 aa).

The active-site Nucleophile is aspartate 408. Residue glutamate 461 is the Proton donor of the active site.

The protein belongs to the glycosyl hydrolase 13 family. GlgB subfamily. In terms of assembly, monomer.

The enzyme catalyses Transfers a segment of a (1-&gt;4)-alpha-D-glucan chain to a primary hydroxy group in a similar glucan chain.. The protein operates within glycan biosynthesis; glycogen biosynthesis. Its function is as follows. Catalyzes the formation of the alpha-1,6-glucosidic linkages in glycogen by scission of a 1,4-alpha-linked oligosaccharide from growing alpha-1,4-glucan chains and the subsequent attachment of the oligosaccharide to the alpha-1,6 position. The protein is 1,4-alpha-glucan branching enzyme GlgB 2 of Xanthomonas campestris pv. campestris (strain 8004).